The following is a 353-amino-acid chain: Glucose import ATP-binding protein GlcV (353 aa).

Residues 4 to 241 (IIVKNVSKVF…PVSIQVASLI (238 aa)) enclose the ABC transporter domain. ATP contacts are provided by residues 40–46 (SGAGKTT), Gln89, and Glu166.

It belongs to the ABC transporter superfamily. In terms of assembly, the complex is composed of two ATP-binding proteins (GlcV), two transmembrane proteins (GlcT and GlcU) and a solute-binding protein (GlcS). Forms transient head-to-tail homodimers in the presence of ATP-Mg(2+).

The protein localises to the cell membrane. The catalysed reaction is D-glucose(out) + ATP + H2O = D-glucose(in) + ADP + phosphate + H(+). In terms of biological role, part of the ABC transporter complex GlcSTUV involved in glucose uptake. Responsible for energy coupling to the transport system. In vitro, as a free subunit, exhibits a constitutive ATPase activity. This chain is Glucose import ATP-binding protein GlcV, found in Saccharolobus solfataricus (strain ATCC 35092 / DSM 1617 / JCM 11322 / P2) (Sulfolobus solfataricus).